The sequence spans 429 residues: Enolase 2 (429 aa).

Gln-163 provides a ligand contact to (2R)-2-phosphoglycerate. The active-site Proton donor is the Glu-205. Residues Asp-242, Glu-286, and Asp-313 each contribute to the Mg(2+) site. 4 residues coordinate (2R)-2-phosphoglycerate: Lys-338, Arg-367, Ser-368, and Lys-389. The Proton acceptor role is filled by Lys-338.

It belongs to the enolase family. Requires Mg(2+) as cofactor.

The protein localises to the cytoplasm. The protein resides in the secreted. It localises to the cell surface. It catalyses the reaction (2R)-2-phosphoglycerate = phosphoenolpyruvate + H2O. It functions in the pathway carbohydrate degradation; glycolysis; pyruvate from D-glyceraldehyde 3-phosphate: step 4/5. Its function is as follows. Catalyzes the reversible conversion of 2-phosphoglycerate (2-PG) into phosphoenolpyruvate (PEP). It is essential for the degradation of carbohydrates via glycolysis. This Lactiplantibacillus plantarum (strain ATCC BAA-793 / NCIMB 8826 / WCFS1) (Lactobacillus plantarum) protein is Enolase 2.